Consider the following 196-residue polypeptide: MIKAISTHTKRHIHYLILNNIQDDNELINLLNAVNCKETILVLEDIDCASEAVKSRAKEEETVVEKVTDDKSTLENKILADQLKKVEKVSKLTLSGILNSLDGIFNSEGRIVIMTTNHSEVLDPALIRRGRIDMQIEFSNCDRYQIAKMYENFYGKNADSDILSKIPSDIYSPAHVSGLLLSYRNNPENSLIELTQ.

Asparagine 32–threonine 39 is a binding site for ATP.

This sequence belongs to the AAA ATPase family.

The protein is Putative AAA family ATPase L572 of Acanthamoeba polyphaga mimivirus (APMV).